We begin with the raw amino-acid sequence, 570 residues long: NADPH oxidase 2 (570 aa).

Over 2-9 (GNWAVNEG) the chain is Cytoplasmic. A helical transmembrane segment spans residues 10-36 (LSIFVILVWLGLNVFLFVWYYRVYDIP). At 37-46 (PKFFYTRKLL) the chain is on the extracellular side. The chain crosses the membrane as a helical span at residues 47 to 72 (GSALALARAPAACLNFNCMLILLPVC). A Ferric oxidoreductase domain is found at 54–286 (RAPAACLNFN…MFLYLCERLV (233 aa)). Residues 73 to 95 (RNLLSFLRGSSACCSTRVRRQLD) lie on the Cytoplasmic side of the membrane. A helical membrane pass occupies residues 96–130 (RNLTFHKMVAWMIALHSAIHTIAHLFNVEWCVNAR). 2 residues coordinate heme b: H101 and H115. Residues 131–163 (VNNSDPYSVALSELGDRQNESYLNFARKRIKNP) lie on the Extracellular side of the membrane. N132 and N149 each carry an N-linked (GlcNAc...) asparagine glycan. K161 participates in a covalent cross-link: Glycyl lysine isopeptide (Lys-Gly) (interchain with G-Cter in ubiquitin). The helical transmembrane segment at 164 to 194 (EGGLYLAVTLLAGITGVVITLCLILIITSST) threads the bilayer. The Cytoplasmic portion of the chain corresponds to 195–203 (KTIRRSYFE). FAD is bound by residues R199 and S200. A helical membrane pass occupies residues 204 to 222 (VFWYTHHLFVIFFIGLAIH). Heme b-binding residues include W206, H209, H222, R226, and I227. The Extracellular portion of the chain corresponds to 223-267 (GAERIVRGQTAESLAVHNITVCEQKISEWGKIKECPIPQFAGNPP). N240 is a glycosylation site (N-linked (GlcNAc...) asparagine). Residue K255 forms a Glycyl lysine isopeptide (Lys-Gly) (interchain with G-Cter in ubiquitin) linkage. Positions 268, 280, and 287 each coordinate heme b. The helical transmembrane segment at 268 to 285 (MTWKWIVGPMFLYLCERL) threads the bilayer. The Cytoplasmic portion of the chain corresponds to 286 to 570 (VRFWRSQQKV…VHFIFNKENF (285 aa)). In terms of domain architecture, FAD-binding FR-type spans 287 to 397 (RFWRSQQKVV…DGPFGTASED (111 aa)). Residues K294, K299, K306, K328, and K334 each participate in a glycyl lysine isopeptide (Lys-Gly) (interchain with G-Cter in ubiquitin) cross-link. Positions 337, 338, 339, 341, 354, 356, 361, and 362 each coordinate FAD. Residue K381 forms a Glycyl lysine isopeptide (Lys-Gly) (interchain with G-Cter in ubiquitin) linkage. Positions 411, 446, and 481 each coordinate NADPH. Residue K506 forms a Glycyl lysine isopeptide (Lys-Gly) (interchain with G-Cter in ubiquitin) linkage. Residue R513 coordinates NADPH. A Glycyl lysine isopeptide (Lys-Gly) (interchain with G-Cter in ubiquitin) cross-link involves residue K567.

Component of the phagocyte NADPH oxidase core complex/cytochrome b558 complex, composed of CYBB (heavy chain (beta)) and CYBA (light chain (alpha)). Component of the phagocyte NADPH oxidase complex composed of an obligatory core heterodimer formed by the membrane proteins CYBA and CYBB and the cytosolic regulatory subunits NCF1/p47-phox, NCF2/p67-phox, NCF4/p40-phox and the small GTPase RAC1 or RAC2. Interacts with NCF1 (phosphorylated form). Interacts with NCF2; the interaction is enhanced in the presence of GBP7. Interacts with RAC2. Interacts with RAC1. Interacts with calprotectin (S100A8/9). Interacts with NRROS; the interaction is direct and impairs formation of a stable NADPH oxidase complex. Interacts with CYBC1; CYBC1 may act as a chaperone stabilizing Cytochrome b-245 heterodimer. The CYBA-CYBB complex interacts with GBP7. FAD serves as cofactor. Post-translationally, glycosylated. In terms of processing, phosphorylated on Ser and Thr residues by PKC during neutrophils activation. Phosphorylation enhances the NADPH oxidase activity and stimulates its interaction with RAC2, NCF2/p67-phox, and NCF1/p47-phox. Undergoes 'Lys-48'-linked polyubiquitination, likely by RNF145, triggering endoplasmic reticulum-associated degradation. In terms of tissue distribution, detected in neutrophils (at protein level).

It is found in the cell membrane. The enzyme catalyses NADPH + 2 O2 = 2 superoxide + NADP(+) + H(+). Its function is as follows. Catalytic subunit of the phagocyte NADPH oxidase complex that mediates the transfer of electrons from cytosolic NADPH to O2 to produce the superoxide anion (O2(-)). In the activated complex, electrons are first transferred from NADPH to flavin adenine dinucleotide (FAD) and subsequently transferred via two heme molecules to molecular oxygen, producing superoxide through an outer-sphere reaction. Activation of the NADPH oxidase complex is initiated by the assembly of cytosolic subunits of the NADPH oxidase complex with the core NADPH oxidase complex to form a complex at the plasma membrane or phagosomal membrane. This activation process is initiated by phosphorylation dependent binding of the cytosolic NCF1/p47-phox subunit to the C-terminus of CYBA/p22-phox. NADPH oxidase complex assembly is impaired through interaction with NRROS. The polypeptide is NADPH oxidase 2 (Homo sapiens (Human)).